The chain runs to 161 residues: Lipid droplet assembly factor 1 (161 aa).

At Met1 to Arg43 the chain is on the cytoplasmic side. Residues Phe44–Met61 traverse the membrane as a helical segment. The Lumenal portion of the chain corresponds to Ser62–Gly67. Residues Phe68–Leu87 form a helical membrane-spanning segment. Topologically, residues Glu88–Ser93 are cytoplasmic. A helical membrane pass occupies residues Val94–Ser110. The Lumenal portion of the chain corresponds to Leu111–Ile116. Residues Thr117–Ser133 form a helical membrane-spanning segment. At Pro134–Leu161 the chain is on the cytoplasmic side.

It belongs to the LDAF1 family. As to quaternary structure, interacts with BSCL2/seipin to form an oligomeric complex.

The protein resides in the endoplasmic reticulum membrane. It localises to the lipid droplet. Its function is as follows. Plays an important role in the formation of lipid droplets (LD) which are storage organelles at the center of lipid and energy homeostasis. In association with BSCL2/seipin, defines the sites of LD formation in the endoplasmic reticulum. The polypeptide is Lipid droplet assembly factor 1 (Rattus norvegicus (Rat)).